Consider the following 437-residue polypeptide: Histidine--tRNA ligase (437 aa).

This sequence belongs to the class-II aminoacyl-tRNA synthetase family. In terms of assembly, homodimer.

The protein localises to the cytoplasm. It catalyses the reaction tRNA(His) + L-histidine + ATP = L-histidyl-tRNA(His) + AMP + diphosphate + H(+). The protein is Histidine--tRNA ligase of Leptospira biflexa serovar Patoc (strain Patoc 1 / Ames).